We begin with the raw amino-acid sequence, 402 residues long: Queuine tRNA-ribosyltransferase-like protein (402 aa).

The protein belongs to the queuine tRNA-ribosyltransferase family.

This chain is Queuine tRNA-ribosyltransferase-like protein, found in Theileria parva (East coast fever infection agent).